The primary structure comprises 70 residues: Small ribosomal subunit protein bS21 (70 aa).

It belongs to the bacterial ribosomal protein bS21 family.

This chain is Small ribosomal subunit protein bS21, found in Campylobacter hominis (strain ATCC BAA-381 / DSM 21671 / CCUG 45161 / LMG 19568 / NCTC 13146 / CH001A).